Reading from the N-terminus, the 132-residue chain is Small ribosomal subunit protein uS8 (132 aa).

This sequence belongs to the universal ribosomal protein uS8 family. As to quaternary structure, part of the 30S ribosomal subunit. Contacts proteins S5 and S12.

Its function is as follows. One of the primary rRNA binding proteins, it binds directly to 16S rRNA central domain where it helps coordinate assembly of the platform of the 30S subunit. The protein is Small ribosomal subunit protein uS8 of Heliobacterium modesticaldum (strain ATCC 51547 / Ice1).